We begin with the raw amino-acid sequence, 691 residues long: DNA ligase (691 aa).

Residues 41-45 (DAEYD), 90-91 (SL), and Glu130 each bind NAD(+). Lys132 serves as the catalytic N6-AMP-lysine intermediate. NAD(+)-binding residues include Arg153, Glu190, Lys307, and Lys331. Zn(2+)-binding residues include Cys425, Cys428, Cys443, and Cys449. The region spanning 610-691 (APQGVLAGKT…MHTLLEGHAR (82 aa)) is the BRCT domain.

This sequence belongs to the NAD-dependent DNA ligase family. LigA subfamily. The cofactor is Mg(2+). Requires Mn(2+) as cofactor.

The catalysed reaction is NAD(+) + (deoxyribonucleotide)n-3'-hydroxyl + 5'-phospho-(deoxyribonucleotide)m = (deoxyribonucleotide)n+m + AMP + beta-nicotinamide D-nucleotide.. Its function is as follows. DNA ligase that catalyzes the formation of phosphodiester linkages between 5'-phosphoryl and 3'-hydroxyl groups in double-stranded DNA using NAD as a coenzyme and as the energy source for the reaction. It is essential for DNA replication and repair of damaged DNA. In Burkholderia pseudomallei (strain 1710b), this protein is DNA ligase.